A 457-amino-acid polypeptide reads, in one-letter code: Probable mitochondrial-processing peptidase subunit beta (457 aa).

His66 is a Zn(2+) binding site. Residue Glu69 is the Proton acceptor of the active site. Zn(2+)-binding residues include His70 and Glu146.

This sequence belongs to the peptidase M16 family. As to quaternary structure, heterodimer of mas2 (alpha) and qcr1 (beta) subunits, forming the mitochondrial processing protease (MPP) in which mas2 is involved in substrate recognition and binding and qcr1 is the catalytic subunit. The cofactor is Zn(2+).

Its subcellular location is the mitochondrion matrix. It carries out the reaction Release of N-terminal transit peptides from precursor proteins imported into the mitochondrion, typically with Arg in position P2.. Its activity is regulated as follows. Binding to mas2 is required for catalytic activity. Functionally, catalytic subunit of the essential mitochondrial processing protease (MPP), which cleaves the mitochondrial sequence off newly imported precursors proteins. Preferentially, cleaves after an arginine at position P2. The polypeptide is Probable mitochondrial-processing peptidase subunit beta (qcr1) (Schizosaccharomyces pombe (strain 972 / ATCC 24843) (Fission yeast)).